A 219-amino-acid polypeptide reads, in one-letter code: Phosphatidylserine decarboxylase proenzyme (219 aa).

The active-site Schiff-base intermediate with substrate; via pyruvic acid is Ser188. Ser188 bears the Pyruvic acid (Ser); by autocatalysis mark.

This sequence belongs to the phosphatidylserine decarboxylase family. PSD-A subfamily. In terms of assembly, heterodimer of a large membrane-associated beta subunit and a small pyruvoyl-containing alpha subunit. It depends on pyruvate as a cofactor. Post-translationally, is synthesized initially as an inactive proenzyme. Formation of the active enzyme involves a self-maturation process in which the active site pyruvoyl group is generated from an internal serine residue via an autocatalytic post-translational modification. Two non-identical subunits are generated from the proenzyme in this reaction, and the pyruvate is formed at the N-terminus of the alpha chain, which is derived from the carboxyl end of the proenzyme. The post-translation cleavage follows an unusual pathway, termed non-hydrolytic serinolysis, in which the side chain hydroxyl group of the serine supplies its oxygen atom to form the C-terminus of the beta chain, while the remainder of the serine residue undergoes an oxidative deamination to produce ammonia and the pyruvoyl prosthetic group on the alpha chain.

The protein localises to the cell membrane. The enzyme catalyses a 1,2-diacyl-sn-glycero-3-phospho-L-serine + H(+) = a 1,2-diacyl-sn-glycero-3-phosphoethanolamine + CO2. Its pathway is phospholipid metabolism; phosphatidylethanolamine biosynthesis; phosphatidylethanolamine from CDP-diacylglycerol: step 2/2. In terms of biological role, catalyzes the formation of phosphatidylethanolamine (PtdEtn) from phosphatidylserine (PtdSer). This is Phosphatidylserine decarboxylase proenzyme from Citrifermentans bemidjiense (strain ATCC BAA-1014 / DSM 16622 / JCM 12645 / Bem) (Geobacter bemidjiensis).